A 55-amino-acid polypeptide reads, in one-letter code: Large ribosomal subunit protein bL33 (55 aa).

Belongs to the bacterial ribosomal protein bL33 family.

In Methylocella silvestris (strain DSM 15510 / CIP 108128 / LMG 27833 / NCIMB 13906 / BL2), this protein is Large ribosomal subunit protein bL33.